Consider the following 224-residue polypeptide: Transmembrane emp24 domain-containing protein 7 (224 aa).

The signal sequence occupies residues 1 to 34 (MPRPGSAQRWAAVAGRWGCRLLALLLLVPGPGGA). The Lumenal segment spans residues 35-187 (SEITFELPDN…RAEDLNTRVA (153 aa)). The region spanning 46-128 (KQCFYEDIAQ…HKTVYFDFQV (83 aa)) is the GOLD domain. Asn-103 carries an N-linked (GlcNAc...) asparagine glycan. The helical transmembrane segment at 188–208 (YWSVGEALILLVVSIGQVFLL) threads the bilayer. The Cytoplasmic segment spans residues 209–224 (KSFFSDKRTTTTRVGS). A COPII vesicle coat-binding motif is present at residues 211–212 (FF). The COPI vesicle coat-binding motif lies at 211 to 224 (FFSDKRTTTTRVGS).

The protein belongs to the EMP24/GP25L family. Predominantly monomeric and to lesser extent homodimeric in endoplasmic reticulum, endoplasmic reticulum-Golgi intermediate compartment and cis-Golgi network. Oligomerizes with other members of the EMP24/GP25L family such as TMED2, TMED9 and TMED10. Interacts (via C-terminus) with COPG1; the interaction involves dimeric TMED7. In terms of processing, N-linked glycosylated in complex form containing terminal sialic acid.

The protein resides in the endoplasmic reticulum membrane. It localises to the golgi apparatus. The protein localises to the cis-Golgi network membrane. It is found in the endoplasmic reticulum-Golgi intermediate compartment membrane. Its subcellular location is the cytoplasmic vesicle. The protein resides in the COPI-coated vesicle membrane. It localises to the COPII-coated vesicle membrane. Functionally, potential role in vesicular protein trafficking, mainly in the early secretory pathway. Appears to play a role in the biosynthesis of secreted cargo including processing and post-translational modifications. The sequence is that of Transmembrane emp24 domain-containing protein 7 (TMED7) from Homo sapiens (Human).